We begin with the raw amino-acid sequence, 226 residues long: Transmembrane emp24 domain-containing protein 5 (226 aa).

The N-terminal stretch at 1-24 (MGDKTWLPFPVVLLAALLLPRAAG) is a signal peptide. Over 25–193 (FTPSLDSDFT…IQESNFDRVN (169 aa)) the chain is Lumenal. The region spanning 42-123 (KECFYQPMPL…EKVIFFELIL (82 aa)) is the GOLD domain. Residues 194–214 (FWSMVNLVVMVVVSAIQVYML) traverse the membrane as a helical segment. Residues 215 to 226 (KSLFEDKRKSRT) are Cytoplasmic-facing. The Mediates export from ER motif lies at 217–218 (LF).

The protein belongs to the EMP24/GP25L family. Interacts with TMED9 and TMED10.

The protein resides in the endoplasmic reticulum membrane. Its subcellular location is the golgi apparatus. It is found in the cis-Golgi network membrane. It localises to the endoplasmic reticulum-Golgi intermediate compartment membrane. Potential role in vesicular protein trafficking, mainly in the early secretory pathway. Required for the maintenance of the Golgi apparatus; involved in protein exchange between Golgi stacks during assembly. Probably not required for COPI-vesicle-mediated retrograde transport. The protein is Transmembrane emp24 domain-containing protein 5 (TMED5) of Bos taurus (Bovine).